The following is a 146-amino-acid chain: Urease accessory protein UreE 1 (146 aa).

The protein belongs to the UreE family.

Its subcellular location is the cytoplasm. Its function is as follows. Involved in urease metallocenter assembly. Binds nickel. Probably functions as a nickel donor during metallocenter assembly. This chain is Urease accessory protein UreE 1, found in Pseudomonas syringae pv. syringae (strain B728a).